Consider the following 554-residue polypeptide: Raftlin (554 aa).

The N-myristoyl glycine moiety is linked to residue glycine 2. The S-palmitoyl cysteine moiety is linked to residue cysteine 3. 2 positions are modified to phosphoserine: serine 183 and serine 199. Disordered regions lie at residues 192-249 (CTLG…NEAG), 441-488 (KKRE…DQFS), and 504-554 (GRAS…TEAN). Composition is skewed to basic and acidic residues over residues 198-209 (SSLENDTPKAAE) and 475-487 (QAEE…EDQF). Phosphoserine is present on residues serine 507 and serine 530. A compositionally biased stretch (basic and acidic residues) spans 526-542 (HNRDSVALRHSNPRAEA).

Belongs to the raftlin family. Interacts with TLR4; the interaction occurs in response to lipopolysaccharide stimulation. Interacts with CLTC; the interaction occurs in response to pathogens. Interacts with AP2A1 and AP2B1. Expressed in T-cells, B-cells, thymus and spleen (at protein level). Expressed in dendritic cells, macrophages, heart, lung and small intestine.

It is found in the cell membrane. Its subcellular location is the cytoplasm. The protein localises to the membrane raft. It localises to the endosome. The protein resides in the early endosome. Involved in protein trafficking via association with clathrin and AP2 complex. Upon bacterial lipopolysaccharide stimulation, mediates internalization of TLR4 to endosomes in dendritic cells and macrophages, and internalization of poly(I:C) to TLR3-positive endosomes in myeloid dendritic cells and epithelial cells; resulting in activation of TICAM1-mediated signaling and subsequent IFNB1 production. Involved in T-cell antigen receptor-mediated signaling by regulating tyrosine kinase LCK localization, T-cell dependent antibody production and cytokine secretion. May regulate B-cell antigen receptor-mediated signaling. May play a pivotal role in the formation and/or maintenance of lipid rafts. This chain is Raftlin (Rftn1), found in Mus musculus (Mouse).